The following is a 212-amino-acid chain: Regulatory protein RecX (212 aa).

The protein belongs to the RecX family.

The protein resides in the cytoplasm. Its function is as follows. Modulates RecA activity. The chain is Regulatory protein RecX from Clostridium botulinum (strain Alaska E43 / Type E3).